The primary structure comprises 198 residues: Ribosomal RNA small subunit methyltransferase G (198 aa).

S-adenosyl-L-methionine contacts are provided by residues Gly-74, Phe-79, 123-124, and Arg-136; that span reads IQ.

It belongs to the methyltransferase superfamily. RNA methyltransferase RsmG family.

It is found in the cytoplasm. The enzyme catalyses guanosine(527) in 16S rRNA + S-adenosyl-L-methionine = N(7)-methylguanosine(527) in 16S rRNA + S-adenosyl-L-homocysteine. Specifically methylates the N7 position of guanine in position 527 of 16S rRNA. The chain is Ribosomal RNA small subunit methyltransferase G from Orientia tsutsugamushi (strain Boryong) (Rickettsia tsutsugamushi).